The primary structure comprises 460 residues: Armadillo repeat-containing protein LFR (460 aa).

Positions 1–30 are disordered; the sequence is MQKRELGKSGGNSGGSSGPPAKRGRPFGST. Residues 8-17 are compositionally biased toward gly residues; it reads KSGGNSGGSS. 3 ARM repeats span residues 227–269, 323–362, and 366–407; these read DNEV…NLAH, NEPFISPLIPQIHKRLIDLLSIQAVDAQAAAVGALYNLVE, and DCRL…NLVS.

Interacts with AS2. As to expression, expressed in roots, leaves, stems and flowers.

It localises to the nucleus. In terms of biological role, involved in leaf and flower development. Plays roles in leaf development partly by associating with AS2 and repressing KNAT1/BP transcription. Required for the formation of anther cell layers and normal expression of genes that regulates anther development. The chain is Armadillo repeat-containing protein LFR from Arabidopsis thaliana (Mouse-ear cress).